We begin with the raw amino-acid sequence, 393 residues long: NAD(P)H-quinone oxidoreductase subunit H, chloroplastic (393 aa).

This sequence belongs to the complex I 49 kDa subunit family. As to quaternary structure, NDH is composed of at least 16 different subunits, 5 of which are encoded in the nucleus.

It localises to the plastid. The protein localises to the chloroplast thylakoid membrane. It catalyses the reaction a plastoquinone + NADH + (n+1) H(+)(in) = a plastoquinol + NAD(+) + n H(+)(out). The enzyme catalyses a plastoquinone + NADPH + (n+1) H(+)(in) = a plastoquinol + NADP(+) + n H(+)(out). Functionally, NDH shuttles electrons from NAD(P)H:plastoquinone, via FMN and iron-sulfur (Fe-S) centers, to quinones in the photosynthetic chain and possibly in a chloroplast respiratory chain. The immediate electron acceptor for the enzyme in this species is believed to be plastoquinone. Couples the redox reaction to proton translocation, and thus conserves the redox energy in a proton gradient. The protein is NAD(P)H-quinone oxidoreductase subunit H, chloroplastic of Chlorokybus atmophyticus (Soil alga).